The following is a 37-amino-acid chain: U1-theraphotoxin-Hs1b (37 aa).

3 disulfide bridges follow: Cys-4/Cys-18, Cys-8/Cys-29, and Cys-23/Cys-34.

As to quaternary structure, form 1 and form 2 may dimerize. As to expression, expressed by the venom gland.

It localises to the secreted. In terms of biological role, lethal neurotoxin that blocks neuromuscular transmission. Acts cooperatively to potentiate the activity of huwentoxin-I. This is U1-theraphotoxin-Hs1b from Cyriopagopus schmidti (Chinese bird spider).